The chain runs to 533 residues: tRNA(Ile)-lysidine synthase (533 aa).

ATP is bound at residue 27-32 (SGGSDS).

Belongs to the tRNA(Ile)-lysidine synthase family.

It localises to the cytoplasm. It carries out the reaction cytidine(34) in tRNA(Ile2) + L-lysine + ATP = lysidine(34) in tRNA(Ile2) + AMP + diphosphate + H(+). Ligates lysine onto the cytidine present at position 34 of the AUA codon-specific tRNA(Ile) that contains the anticodon CAU, in an ATP-dependent manner. Cytidine is converted to lysidine, thus changing the amino acid specificity of the tRNA from methionine to isoleucine. The chain is tRNA(Ile)-lysidine synthase from Rickettsia peacockii (strain Rustic).